Here is a 290-residue protein sequence, read N- to C-terminus: Cbb3-type cytochrome c oxidase subunit CcoP (290 aa).

Residues Met-1–Gly-22 form a disordered region. Over Met-1–Thr-37 the chain is Cytoplasmic. The helical transmembrane segment at Phe-38–Ile-58 threads the bilayer. Over Asn-59–Glu-290 the chain is Periplasmic. Cytochrome c domains are found at residues Tyr-109–Ser-199 and Ala-206–Gly-287. Heme c contacts are provided by Cys-122, Cys-125, His-126, Met-174, Cys-219, Cys-222, His-223, and Met-264.

This sequence belongs to the CcoP / FixP family. Component of the cbb3-type cytochrome c oxidase at least composed of CcoN, CcoO, CcoQ and CcoP. The cofactor is heme c.

It localises to the cell inner membrane. It functions in the pathway energy metabolism; oxidative phosphorylation. C-type cytochrome. Part of the cbb3-type cytochrome c oxidase complex. CcoP subunit is required for transferring electrons from donor cytochrome c via its heme groups to CcoO subunit. From there, electrons are shuttled to the catalytic binuclear center of CcoN subunit where oxygen reduction takes place. The complex also functions as a proton pump. In Cereibacter sphaeroides (strain ATCC 17023 / DSM 158 / JCM 6121 / CCUG 31486 / LMG 2827 / NBRC 12203 / NCIMB 8253 / ATH 2.4.1.) (Rhodobacter sphaeroides), this protein is Cbb3-type cytochrome c oxidase subunit CcoP.